Consider the following 151-residue polypeptide: Probable flavodoxin 2 (151 aa).

A Flavodoxin-like domain is found at 4–144 (ILLVYATMSG…ELINFGRQFA (141 aa)). FMN contacts are provided by residues 10–14 (TMSGN) and 88–119 (VFGS…DIVL).

It belongs to the flavodoxin family. Requires FMN as cofactor.

Its function is as follows. Low-potential electron donor to a number of redox enzymes. In Bacillus subtilis (strain 168), this protein is Probable flavodoxin 2 (ykuP).